The following is a 291-amino-acid chain: Tyrosine-protein kinase PtkA (291 aa).

The interval 1 to 79 (MSSPRERRPA…RRASSPGESP (79 aa)) is disordered. Residues 23–60 (HQTSRSSPDTTAPTGSGLSNRFVNDNGIVTDTTASGTN) show a composition bias toward polar residues. Tyr-262 bears the Phosphotyrosine mark.

The protein belongs to the HAD-like hydrolase superfamily. CbbY/CbbZ/Gph/YieH family. Interacts with PtpA. Post-translationally, autophosphorylated.

It catalyses the reaction L-tyrosyl-[protein] + ATP = O-phospho-L-tyrosyl-[protein] + ADP + H(+). Required for growth within macrophages. Catalyzes the phosphorylation of PtpA on the tyrosine residues at positions 128 and 129, thereby increasing PtpA phosphatase activity and promoting pathogenicity. This chain is Tyrosine-protein kinase PtkA, found in Mycobacterium bovis (strain ATCC BAA-935 / AF2122/97).